Consider the following 144-residue polypeptide: uncharacterized protein (144 aa).

The N-terminal stretch at 1–22 (MCTDVAFFSLDCLATWLGGVCS) is a signal peptide.

This is an uncharacterized protein from Saccharomyces cerevisiae (strain ATCC 204508 / S288c) (Baker's yeast).